A 620-amino-acid polypeptide reads, in one-letter code: Toxin coregulated pilus biosynthesis protein I (620 aa).

Residues 344-580 enclose the Methyl-accepting transducer domain; it reads TMNDLSIKQT…DVAKQMEDIR (237 aa).

The protein belongs to the methyl-accepting chemotaxis (MCP) protein family.

The protein resides in the cell inner membrane. May function as an environmental regulator of TCP biogenesis. Negatively regulates the synthesis of the major pilin subunit of TCP (TcpA). This is Toxin coregulated pilus biosynthesis protein I (tcpI) from Vibrio cholerae serotype O1 (strain ATCC 39541 / Classical Ogawa 395 / O395).